We begin with the raw amino-acid sequence, 186 residues long: Ribonuclease M5 (186 aa).

The 84-residue stretch at 6–89 (SQVIVVEGRD…AFLKRDEAVP (84 aa)) folds into the Toprim domain. Mg(2+)-binding residues include Glu12, Asp58, and Asp60.

The protein belongs to the ribonuclease M5 family. Requires Mg(2+) as cofactor.

The protein localises to the cytoplasm. It catalyses the reaction Endonucleolytic cleavage of RNA, removing 21 and 42 nucleotides, respectively, from the 5'- and 3'-termini of a 5S-rRNA precursor.. Functionally, required for correct processing of both the 5' and 3' ends of 5S rRNA precursor. Cleaves both sides of a double-stranded region yielding mature 5S rRNA in one step. The chain is Ribonuclease M5 from Streptococcus pneumoniae (strain ATCC BAA-255 / R6).